The sequence spans 612 residues: Dihydroxy-acid dehydratase (612 aa).

Asp81 lines the Mg(2+) pocket. Cys122 is a binding site for [2Fe-2S] cluster. Mg(2+) contacts are provided by Asp123 and Lys124. At Lys124 the chain carries N6-carboxylysine. Cys193 is a binding site for [2Fe-2S] cluster. Glu489 contributes to the Mg(2+) binding site. The active-site Proton acceptor is Ser515.

Belongs to the IlvD/Edd family. Homodimer. [2Fe-2S] cluster is required as a cofactor. The cofactor is Mg(2+).

It catalyses the reaction (2R)-2,3-dihydroxy-3-methylbutanoate = 3-methyl-2-oxobutanoate + H2O. The catalysed reaction is (2R,3R)-2,3-dihydroxy-3-methylpentanoate = (S)-3-methyl-2-oxopentanoate + H2O. The protein operates within amino-acid biosynthesis; L-isoleucine biosynthesis; L-isoleucine from 2-oxobutanoate: step 3/4. It participates in amino-acid biosynthesis; L-valine biosynthesis; L-valine from pyruvate: step 3/4. Functionally, functions in the biosynthesis of branched-chain amino acids. Catalyzes the dehydration of (2R,3R)-2,3-dihydroxy-3-methylpentanoate (2,3-dihydroxy-3-methylvalerate) into 2-oxo-3-methylpentanoate (2-oxo-3-methylvalerate) and of (2R)-2,3-dihydroxy-3-methylbutanoate (2,3-dihydroxyisovalerate) into 2-oxo-3-methylbutanoate (2-oxoisovalerate), the penultimate precursor to L-isoleucine and L-valine, respectively. The sequence is that of Dihydroxy-acid dehydratase from Stenotrophomonas maltophilia (strain K279a).